A 235-amino-acid chain; its full sequence is Pyridoxine 5'-phosphate synthase (235 aa).

N7 contacts 3-amino-2-oxopropyl phosphate. 9-10 (DH) is a binding site for 1-deoxy-D-xylulose 5-phosphate. R18 serves as a coordination point for 3-amino-2-oxopropyl phosphate. H43 acts as the Proton acceptor in catalysis. Residues R45 and H50 each contribute to the 1-deoxy-D-xylulose 5-phosphate site. E70 functions as the Proton acceptor in the catalytic mechanism. 1-deoxy-D-xylulose 5-phosphate is bound at residue T100. H187 (proton donor) is an active-site residue. Residues G188 and 209–210 (GH) contribute to the 3-amino-2-oxopropyl phosphate site.

This sequence belongs to the PNP synthase family. In terms of assembly, homooctamer; tetramer of dimers.

Its subcellular location is the cytoplasm. It carries out the reaction 3-amino-2-oxopropyl phosphate + 1-deoxy-D-xylulose 5-phosphate = pyridoxine 5'-phosphate + phosphate + 2 H2O + H(+). It functions in the pathway cofactor biosynthesis; pyridoxine 5'-phosphate biosynthesis; pyridoxine 5'-phosphate from D-erythrose 4-phosphate: step 5/5. Functionally, catalyzes the complicated ring closure reaction between the two acyclic compounds 1-deoxy-D-xylulose-5-phosphate (DXP) and 3-amino-2-oxopropyl phosphate (1-amino-acetone-3-phosphate or AAP) to form pyridoxine 5'-phosphate (PNP) and inorganic phosphate. This Desulfatibacillum aliphaticivorans protein is Pyridoxine 5'-phosphate synthase.